The following is a 392-amino-acid chain: Outer membrane protein assembly factor BamB (392 aa).

The N-terminal stretch at 1 to 19 is a signal peptide; sequence MQLRKLLLPGLLSVTLLSG. Cysteine 20 is lipidated: N-palmitoyl cysteine. Cysteine 20 is lipidated: S-diacylglycerol cysteine.

The protein belongs to the BamB family. In terms of assembly, part of the Bam complex, which is composed of the outer membrane protein BamA, and four lipoproteins BamB, BamC, BamD and BamE.

It localises to the cell outer membrane. Functionally, part of the outer membrane protein assembly complex, which is involved in assembly and insertion of beta-barrel proteins into the outer membrane. In Salmonella typhimurium (strain LT2 / SGSC1412 / ATCC 700720), this protein is Outer membrane protein assembly factor BamB.